A 173-amino-acid polypeptide reads, in one-letter code: Probable DNA-directed RNA polymerase subunit delta (173 aa).

An HTH HARE-type domain is found at N14–W81. Residues L113–E173 are disordered. Residues G115 to E173 show a composition bias toward acidic residues.

This sequence belongs to the RpoE family. In terms of assembly, RNAP is composed of a core of 2 alpha, a beta and a beta' subunits. The core is associated with a delta subunit and one of several sigma factors.

Participates in both the initiation and recycling phases of transcription. In the presence of the delta subunit, RNAP displays an increased specificity of transcription, a decreased affinity for nucleic acids, and an increased efficiency of RNA synthesis because of enhanced recycling. The protein is Probable DNA-directed RNA polymerase subunit delta of Macrococcus caseolyticus (strain JCSC5402) (Macrococcoides caseolyticum).